The following is a 1429-amino-acid chain: Probable ATP-dependent RNA helicase spindle-E (1429 aa).

The region spanning 121-288 is the Helicase ATP-binding domain; the sequence is VNAINTHQVV…FSTKVSVPPV (168 aa). 134-141 lines the ATP pocket; that stretch reads GETGCGKT. The DEAH box signature appears at 234–237; sequence DEVH. The region spanning 349–521 is the Helicase C-terminal domain; sequence QSEQSYDDAK…NSVLKAKLLD (173 aa). Positions 933-996 constitute a Tudor domain; the sequence is AGVLTKGMMV…RLMTKELLSQ (64 aa).

The protein belongs to the DEAD box helicase family. DEAH subfamily.

It is found in the cytoplasm. It catalyses the reaction ATP + H2O = ADP + phosphate + H(+). Functionally, probable ATP-binding RNA helicase which plays a central role during spermatogenesis and oogenesis by repressing transposable elements and preventing their mobilization, which is essential for the germline integrity. Acts via the piRNA metabolic process, which mediates the repression of transposable elements during meiosis by forming complexes composed of piRNAs and Piwi and govern the methylation and subsequent repression of transposons. Involved in the repression of LTR retrotransposon copia. Also involved in telomere regulation by repressing specialized telomeric retroelements HeT-A, TAHRE, and TART; Drosophila telomeres being maintained by transposition of specialized telomeric retroelements. Involved in telomeric trans-silencing, a repression mechanism by which a transposon or a transgene inserted in subtelomeric heterochromatin has the capacity to repress in trans in the female germline, a homologous transposon, or transgene located in euchromatin. Involved in the repression of testis-expressed Stellate genes by the homologous Su(Ste) repeats. Required for anteroposterior and dorsoventral axis formation during oogenesis. This Drosophila ananassae (Fruit fly) protein is Probable ATP-dependent RNA helicase spindle-E (spn-E).